The primary structure comprises 277 residues: 5-formyltetrahydrofolate cyclo-ligase, mitochondrial (277 aa).

The N-terminal 48 residues, 1-48, are a transit peptide targeting the mitochondrion; the sequence is MIGARVFCITTTALRRSPIFFFPKIPTRPVFRLSPATRPIVAMSTTSK. Residue 60 to 64 participates in ATP binding; that stretch reads KRVVR. Substrate contacts are provided by residues glutamate 113 and 207-211; that span reads RGGGY. ATP is bound by residues 206–213 and aspartate 254; that span reads GRGGGYYD.

The protein belongs to the 5-formyltetrahydrofolate cyclo-ligase family. As to quaternary structure, monomer.

It is found in the mitochondrion. It carries out the reaction (6S)-5-formyl-5,6,7,8-tetrahydrofolate + ATP = (6R)-5,10-methenyltetrahydrofolate + ADP + phosphate. Its function is as follows. Contributes to tetrahydrofolate metabolism and photorespiration through the regulation of serine hydroxymethyltransferase. Prefers the pentalutamyl to the monoglutamyl form of 5-formyltetrahydrofolate. This Arabidopsis thaliana (Mouse-ear cress) protein is 5-formyltetrahydrofolate cyclo-ligase, mitochondrial (5FCL).